Consider the following 279-residue polypeptide: Tryptophan synthase alpha chain (279 aa).

Residues Glu50 and Asp61 each act as proton acceptor in the active site.

It belongs to the TrpA family. Tetramer of two alpha and two beta chains.

The catalysed reaction is (1S,2R)-1-C-(indol-3-yl)glycerol 3-phosphate + L-serine = D-glyceraldehyde 3-phosphate + L-tryptophan + H2O. It functions in the pathway amino-acid biosynthesis; L-tryptophan biosynthesis; L-tryptophan from chorismate: step 5/5. Its function is as follows. The alpha subunit is responsible for the aldol cleavage of indoleglycerol phosphate to indole and glyceraldehyde 3-phosphate. This Rhizobium johnstonii (strain DSM 114642 / LMG 32736 / 3841) (Rhizobium leguminosarum bv. viciae) protein is Tryptophan synthase alpha chain.